The sequence spans 335 residues: Urokinase plasminogen activator surface receptor (335 aa).

An N-terminal signal peptide occupies residues 1 to 22 (MGHPLLLPLLLLLHTCVPASWG). 3 consecutive UPAR/Ly6 domains span residues 23 to 114 (LRCM…RSRY), 115 to 213 (LECI…PQNG), and 214 to 305 (HQCY…YRKG). 3 cysteine pairs are disulfide-bonded: C25–C46, C28–C34, and C39–C67. Residue N74 is glycosylated (N-linked (GlcNAc...) asparagine). 11 cysteine pairs are disulfide-bonded: C93–C98, C117–C144, C120–C127, C137–C169, C175–C192, C193–C198, C216–C244, C219–C227, C237–C263, C269–C287, and C288–C293. N-linked (GlcNAc...) asparagine glycosylation is found at N184, N194, N222, N255, and N284. Residue G305 is the site of GPI-anchor amidated glycine attachment. Positions 306 to 335 (AAPQPGPAHLSLTITLLMTARLWGGTLLWT) are cleaved as a propeptide — removed in mature form.

In terms of assembly, monomer. Interacts (via the UPAR/Ly6 domains) with SRPX2. Interacts with MRC2. Interacts with FAP (seprase); the interaction occurs at the cell surface of invadopodia membrane. Interacts with SORL1 (via N-terminal ectodomain); this interaction decreases PLAUR internalization. The ternary complex composed of PLAUR-PLAU-SERPINE1 also interacts with SORL1.

The protein localises to the cell membrane. The protein resides in the cell projection. It is found in the invadopodium membrane. Its function is as follows. Acts as a receptor for urokinase plasminogen activator. Plays a role in localizing and promoting plasmin formation. Mediates the proteolysis-independent signal transduction activation effects of U-PA. It is subject to negative-feedback regulation by U-PA which cleaves it into an inactive form. This is Urokinase plasminogen activator surface receptor (PLAUR) from Macaca fascicularis (Crab-eating macaque).